A 311-amino-acid polypeptide reads, in one-letter code: Cytochrome f (311 aa).

A signal peptide spans 1-27; it reads MRRHLSLVLGSLVIGLALLIAPGASWA. Heme contacts are provided by Tyr28, Cys48, Cys51, and His52. Residues 277–297 traverse the membrane as a helical segment; the sequence is IYGLLAFFAAVAIAQIMLVLK.

The protein belongs to the cytochrome f family. As to quaternary structure, the 4 large subunits of the cytochrome b6-f complex are cytochrome b6, subunit IV (17 kDa polypeptide, PetD), cytochrome f and the Rieske protein, while the 4 small subunits are PetG, PetL, PetM and PetN. The complex functions as a dimer. It depends on heme as a cofactor.

It is found in the cellular thylakoid membrane. Its function is as follows. Component of the cytochrome b6-f complex, which mediates electron transfer between photosystem II (PSII) and photosystem I (PSI), cyclic electron flow around PSI, and state transitions. The sequence is that of Cytochrome f from Synechococcus sp. (strain CC9902).